The primary structure comprises 440 residues: Tyrosine--tRNA ligase (440 aa).

L-tyrosine is bound at residue Tyr-46. Positions 51–60 (PTAPSLHIGN) match the 'HIGH' region motif. Residues Tyr-181 and Gln-185 each contribute to the L-tyrosine site. A 'KMSKS' region motif is present at residues 241 to 245 (KFGKS). Lys-244 contributes to the ATP binding site. Residues 373–430 (DRIAQAGVSAGLFKSISEARKTIKSGGVYVNNVRVEDEEQLLGDGDFLKGRFVVLRRG) enclose the S4 RNA-binding domain.

Belongs to the class-I aminoacyl-tRNA synthetase family. TyrS type 1 subfamily. In terms of assembly, homodimer.

It is found in the cytoplasm. The catalysed reaction is tRNA(Tyr) + L-tyrosine + ATP = L-tyrosyl-tRNA(Tyr) + AMP + diphosphate + H(+). Functionally, catalyzes the attachment of tyrosine to tRNA(Tyr) in a two-step reaction: tyrosine is first activated by ATP to form Tyr-AMP and then transferred to the acceptor end of tRNA(Tyr). The sequence is that of Tyrosine--tRNA ligase from Bifidobacterium animalis subsp. lactis (strain AD011).